The sequence spans 758 residues: Xaa-Pro dipeptidyl-peptidase (758 aa).

Catalysis depends on charge relay system residues serine 349, aspartate 469, and histidine 499.

This sequence belongs to the peptidase S15 family. In terms of assembly, homodimer.

The protein resides in the cytoplasm. The enzyme catalyses Hydrolyzes Xaa-Pro-|- bonds to release unblocked, N-terminal dipeptides from substrates including Ala-Pro-|-p-nitroanilide and (sequentially) Tyr-Pro-|-Phe-Pro-|-Gly-Pro-|-Ile.. Its function is as follows. Removes N-terminal dipeptides sequentially from polypeptides having unsubstituted N-termini provided that the penultimate residue is proline. The polypeptide is Xaa-Pro dipeptidyl-peptidase (Streptococcus uberis (strain ATCC BAA-854 / 0140J)).